Here is a 132-residue protein sequence, read N- to C-terminus: MASIAGSAVSFAKPVKAINTNSLSFSGARRGNAFLRLQPVPMRFAVCCSAKQDTVEKVCEIVKKQLAVPEGTEVCGTTKFSDLGADSLDTVEIVMGLEEEFQISVEETSAQAIATVEDAATLIDKLVSAKSS.

A chloroplast-targeting transit peptide spans 1-49 (MASIAGSAVSFAKPVKAINTNSLSFSGARRGNAFLRLQPVPMRFAVCCS). A Carrier domain is found at 52–127 (QDTVEKVCEI…DAATLIDKLV (76 aa)). Residue Ser-87 is modified to O-(pantetheine 4'-phosphoryl)serine.

It belongs to the acyl carrier protein (ACP) family. In terms of processing, 4'-phosphopantetheine is transferred from CoA to a specific serine of apo-ACP by acpS. This modification is essential for activity because fatty acids are bound in thioester linkage to the sulfhydryl of the prosthetic group.

Its subcellular location is the plastid. The protein localises to the chloroplast. The protein operates within lipid metabolism; fatty acid biosynthesis. In terms of biological role, carrier of the growing fatty acid chain in fatty acid biosynthesis. The polypeptide is Acyl carrier protein 3, chloroplastic (ACL1.3) (Hordeum vulgare (Barley)).